Reading from the N-terminus, the 317-residue chain is Tyrosine--tRNA ligase (317 aa).

Tyrosine 33 contacts L-tyrosine. Residues 38–46 (PSGKIHMGH) carry the 'HIGH' region motif. Positions 155, 159, 162, and 177 each coordinate L-tyrosine. A 'KMSKS' region motif is present at residues 211–215 (KMASS). Residue serine 214 coordinates ATP.

Belongs to the class-I aminoacyl-tRNA synthetase family. TyrS type 3 subfamily. In terms of assembly, homodimer.

It localises to the cytoplasm. The enzyme catalyses tRNA(Tyr) + L-tyrosine + ATP = L-tyrosyl-tRNA(Tyr) + AMP + diphosphate + H(+). In terms of biological role, catalyzes the attachment of tyrosine to tRNA(Tyr) in a two-step reaction: tyrosine is first activated by ATP to form Tyr-AMP and then transferred to the acceptor end of tRNA(Tyr). This chain is Tyrosine--tRNA ligase, found in Methanosarcina acetivorans (strain ATCC 35395 / DSM 2834 / JCM 12185 / C2A).